The sequence spans 390 residues: tRNA-specific 2-thiouridylase MnmA (390 aa).

ATP contacts are provided by residues 36–43 (GMSGGVDS) and methionine 62. Positions 122–124 (NPD) are interaction with target base in tRNA. The active-site Nucleophile is the cysteine 127. A disulfide bridge links cysteine 127 with cysteine 223. Glycine 151 lines the ATP pocket. The interaction with tRNA stretch occupies residues 173-175 (KDQ). The active-site Cysteine persulfide intermediate is cysteine 223. An interaction with tRNA region spans residues 335-336 (RY).

This sequence belongs to the MnmA/TRMU family.

The protein resides in the cytoplasm. It catalyses the reaction S-sulfanyl-L-cysteinyl-[protein] + uridine(34) in tRNA + AH2 + ATP = 2-thiouridine(34) in tRNA + L-cysteinyl-[protein] + A + AMP + diphosphate + H(+). Its function is as follows. Catalyzes the 2-thiolation of uridine at the wobble position (U34) of tRNA, leading to the formation of s(2)U34. This is tRNA-specific 2-thiouridylase MnmA from Marinomonas sp. (strain MWYL1).